The primary structure comprises 102 residues: Ferredoxin, 2Fe-2S (102 aa).

4 residues coordinate [2Fe-2S] cluster: Cys11, Cys24, Cys56, and Cys60.

This sequence belongs to the 2Fe2S Shethna-type ferredoxin family. [2Fe-2S] cluster is required as a cofactor.

Its function is as follows. Ferredoxins are iron-sulfur proteins that transfer electrons in a wide variety of metabolic reactions. The protein is Ferredoxin, 2Fe-2S of Clostridium pasteurianum.